The sequence spans 639 residues: PTS-dependent dihydroxyacetone kinase operon regulatory protein (639 aa).

The segment at 1–318 (MSGAFNNDGR…MRQLMTSQLG (318 aa)) is sensor domain. A GAF domain is found at 52 to 189 (AMLTLGQAAL…AIAREVGNLL (138 aa)). Residues 203–265 (NQLNALLESM…AVLQQAIKQA (63 aa)) enclose the PAS domain. Residues 327 to 552 (MPQDDPQTRR…LYSVIENLAL (226 aa)) enclose the Sigma-54 factor interaction domain. ATP contacts are provided by residues 355–362 (GEEGVGKA) and 415–424 (AHGGTLFLEK).

As to quaternary structure, homodimer. DhaR forms complexes with DhaK and DhaL-ADP.

In terms of biological role, positively regulates the dhaKLM operon from a sigma-70 promoter. Represses its own expression. The sequence is that of PTS-dependent dihydroxyacetone kinase operon regulatory protein from Escherichia coli (strain K12).